The sequence spans 1213 residues: MVDVNRFKSMQITLASPSKVRSWSYGEVKKPETINYRTLKPEREGLFDEVIFGPTKDWECACGKYKRIRYKGIVCDRCGVEVTRAKVRRERMGHIELKAPVSHIWYFKGIPSRMGLTLDMSPRALEEVIYFAAYVVIDPKDTPLEPKSLLTEREYREKLQEYGHGSFVAKMGAEAIQDLLKRVDLAAEIAELKEELKSASGQKRIKAVRRLDVLDAFNKSGNKPEWMVLNILPVIPPDLRPMVQLDGGRFAASDLNDLYRRVINRNNRLARLLELNAPGIIVQNEKRMLQEAVDALIDNGRRGRPITGPGSRPLKSLSHMLKGKQGRFRQNLLGKRVDFSGRSVIAVGPTLKMYQCGVPREMAIELFKPFVMREIVAKEYAGNVKAAKRMVERGDERIWDILEEVIKEHPVLLNRAPTLHRLGIQAFEPVLIDGKALRLHPLVCEAYNADFDGDQMAIHVPLSEEAQAEARLLMLAAEHILNPKDGKPVVTPSQDMVLGNYYLTMEDAGREGEGMIFKDKDEAVMAYRNGYAHLHSRVGIAVDSMPNKPWKDSQRHKIMVTTVGKILFNDIMPEDLPYLQEPNNANLTEGTPDKYFLEPGQDIQEVIDGLEINVPFKKKNLGNIIAETFKRFRTTETSAFLDRLKDLGYYHSTLAGLTVGIADIPVIDNKAEIIDAAHHRVEEINKAFRRGLMTDDDRYVAVTTTWREAKEALEKRLIETQDPKNPIVMMMDSGARGNISNFSQLAGMRGLMAAPNGRIMELPILSNFREGLSVLEMFFSTHGARKGMTDTALKTADSGYLTRRLVDVAQDVIIREDDCGTDRGLLICAITDGKEVTETLEERLQGRYTRKSVKHPETGEVLIGADQLITEDMARKIVDAGVEEVTIRSVFTCATRHGVCRHCYGINLATGDAVEVGEAVGTIAAQSIGEPGTQLTMRTFHTGGVASNTDITQGLPRIQEIFEARNPKGEAVITEVKGNVVEIEEDASTRTKKVYVQGKTGMGEYVVPFTARMKVEVGDEVNRGAALTEGSIQPKRLLEVRDTLSVETYLLAEVQKVYRSQGVEIGDKHVEVMVRQMLRKVRVMDPGDTDLLPGTLMDISDFTDANKDIVISGGIPATSRPVLMGITKASLETNSFLSAASFQETTRVLTDAAIRGKKDHLLGLKENVIIGKIIPAGTGMARYRNIEPQAMNEIEVIDHTEVSAEAVFTAEAE.

Residues cysteine 60, cysteine 62, cysteine 75, and cysteine 78 each contribute to the Zn(2+) site. The Mg(2+) site is built by aspartate 450, aspartate 452, and aspartate 454. Zn(2+) is bound by residues cysteine 819, cysteine 893, cysteine 900, and cysteine 903.

It belongs to the RNA polymerase beta' chain family. The RNAP catalytic core consists of 2 alpha, 1 beta, 1 beta' and 1 omega subunit. When a sigma factor is associated with the core the holoenzyme is formed, which can initiate transcription. It depends on Mg(2+) as a cofactor. The cofactor is Zn(2+).

The catalysed reaction is RNA(n) + a ribonucleoside 5'-triphosphate = RNA(n+1) + diphosphate. DNA-dependent RNA polymerase catalyzes the transcription of DNA into RNA using the four ribonucleoside triphosphates as substrates. In Streptococcus pyogenes serotype M18 (strain MGAS8232), this protein is DNA-directed RNA polymerase subunit beta'.